We begin with the raw amino-acid sequence, 232 residues long: Ubiquinone biosynthesis O-methyltransferase (232 aa).

S-adenosyl-L-methionine-binding residues include arginine 36, glycine 55, aspartate 76, and leucine 120.

This sequence belongs to the methyltransferase superfamily. UbiG/COQ3 family.

The catalysed reaction is a 3-demethylubiquinol + S-adenosyl-L-methionine = a ubiquinol + S-adenosyl-L-homocysteine + H(+). It catalyses the reaction a 3-(all-trans-polyprenyl)benzene-1,2-diol + S-adenosyl-L-methionine = a 2-methoxy-6-(all-trans-polyprenyl)phenol + S-adenosyl-L-homocysteine + H(+). It functions in the pathway cofactor biosynthesis; ubiquinone biosynthesis. O-methyltransferase that catalyzes the 2 O-methylation steps in the ubiquinone biosynthetic pathway. In Azotobacter vinelandii (strain DJ / ATCC BAA-1303), this protein is Ubiquinone biosynthesis O-methyltransferase.